We begin with the raw amino-acid sequence, 882 residues long: DNA replication helicase (882 aa).

The segment at 1-29 (MAAAGGERQLDGQKPGPPHLQQPGDRPAV) is disordered. 97–104 (GNAGSGKS) serves as a coordination point for ATP.

The protein belongs to the herpesviridae helicase family. In terms of assembly, associates with the primase and the primase-associated factor to form the helicase-primase complex.

It is found in the host nucleus. Functionally, component of the helicase/primase complex. Unwinds the DNA at the replication forks and generates single-stranded DNA for both leading and lagging strand synthesis. The primase synthesizes short RNA primers on the lagging strand that the polymerase elongates using dNTPs. Possesses helicase-like motifs and therefore may act as the helicase subunit of the complex. The sequence is that of DNA replication helicase from Homo sapiens (Human).